Reading from the N-terminus, the 598-residue chain is Elongation factor 4 (598 aa).

Residues 4 to 186 enclose the tr-type G domain; sequence SHIRNFAIIA…AIVSRLPAPS (183 aa). Residues 16-21 and 133-136 contribute to the GTP site; these read DHGKST and NKID.

It belongs to the TRAFAC class translation factor GTPase superfamily. Classic translation factor GTPase family. LepA subfamily.

The protein localises to the cell inner membrane. It carries out the reaction GTP + H2O = GDP + phosphate + H(+). In terms of biological role, required for accurate and efficient protein synthesis under certain stress conditions. May act as a fidelity factor of the translation reaction, by catalyzing a one-codon backward translocation of tRNAs on improperly translocated ribosomes. Back-translocation proceeds from a post-translocation (POST) complex to a pre-translocation (PRE) complex, thus giving elongation factor G a second chance to translocate the tRNAs correctly. Binds to ribosomes in a GTP-dependent manner. The sequence is that of Elongation factor 4 from Ehrlichia chaffeensis (strain ATCC CRL-10679 / Arkansas).